A 96-amino-acid polypeptide reads, in one-letter code: Plasminogen-like protein B (96 aa).

The first 19 residues, 1-19 (MEHKEVVLLLLLFLKSGQG), serve as a signal peptide directing secretion. The PAN domain occupies 20–96 (EPLDDYVNTQ…RMRDAVLFEK (77 aa)). Disulfide bonds link Cys49/Cys73 and Cys53/Cys61.

It localises to the secreted. Its function is as follows. May bind noncovalently to lysine binding sites present in the kringle structures of plasminogen. This may interfere with the binding of fibrin or alpha-2-antiplasmin to plasminogen and may result in the localization of activity at sites necessary for extracellular matrix destruction. The sequence is that of Plasminogen-like protein B (PLGLB1) from Homo sapiens (Human).